The primary structure comprises 275 residues: NH(3)-dependent NAD(+) synthetase (275 aa).

46–53 (GISGGQDS) provides a ligand contact to ATP. Asp52 contributes to the Mg(2+) binding site. Residue Arg140 coordinates deamido-NAD(+). Position 160 (Thr160) interacts with ATP. Glu165 contributes to the Mg(2+) binding site. Deamido-NAD(+)-binding residues include Lys173 and Asp180. Positions 189 and 211 each coordinate ATP. 260 to 261 (HK) contacts deamido-NAD(+).

The protein belongs to the NAD synthetase family. In terms of assembly, homodimer.

The catalysed reaction is deamido-NAD(+) + NH4(+) + ATP = AMP + diphosphate + NAD(+) + H(+). Its pathway is cofactor biosynthesis; NAD(+) biosynthesis; NAD(+) from deamido-NAD(+) (ammonia route): step 1/1. Catalyzes the ATP-dependent amidation of deamido-NAD to form NAD. Uses ammonia as a nitrogen source. This chain is NH(3)-dependent NAD(+) synthetase, found in Salmonella heidelberg (strain SL476).